Reading from the N-terminus, the 82-residue chain is Probable glutamyl-tRNA(Gln) amidotransferase subunit C (82 aa).

The protein belongs to the GatC family. Heterotrimer of A, B and C subunits.

It catalyses the reaction L-glutamyl-tRNA(Gln) + L-glutamine + ATP + H2O = L-glutaminyl-tRNA(Gln) + L-glutamate + ADP + phosphate + H(+). It carries out the reaction L-aspartyl-tRNA(Asn) + L-glutamine + ATP + H2O = L-asparaginyl-tRNA(Asn) + L-glutamate + ADP + phosphate + 2 H(+). Its function is as follows. Allows the formation of correctly charged Asn-tRNA(Asn) or Gln-tRNA(Gln) through the transamidation of misacylated Asp-tRNA(Asn) or Glu-tRNA(Gln) in organisms which lack either or both of asparaginyl-tRNA or glutaminyl-tRNA synthetases. The reaction takes place in the presence of glutamine and ATP through an activated phospho-Asp-tRNA(Asn) or phospho-Glu-tRNA(Gln). The chain is Probable glutamyl-tRNA(Gln) amidotransferase subunit C from Methanocaldococcus jannaschii (strain ATCC 43067 / DSM 2661 / JAL-1 / JCM 10045 / NBRC 100440) (Methanococcus jannaschii).